Consider the following 1736-residue polypeptide: Hybrid signal transduction histidine kinase I (1736 aa).

Residues 143–161 are compositionally biased toward low complexity; sequence HNINNNQNNQNSVNINSSN. A disordered region spans residues 143 to 171; the sequence is HNINNNQNNQNSVNINSSNKGQYNRPEPS. One can recognise a PAC domain in the interval 234-286; it reads FEYPLRINRKNDNLVRYIQLKGEIIKKDDKVFKVLGVCHDFSEIQEAKDKLEE. Residues 287 to 358 form the PAS domain; the sequence is ESKFVEALIG…QINLEKSGTP (72 aa). The tract at residues 378 to 469 is disordered; sequence TSNQQQSSLS…NTTNGIGGAT (92 aa). The span at 379-389 shows a compositional bias: low complexity; the sequence is SNQQQSSLSKS. Residues 392–412 are compositionally biased toward polar residues; that stretch reads PRSQSNCSNGNKSQNRLSKNY. Low complexity predominate over residues 413-469; the sequence is STTTTTTNNNNNNNNNNNNNNNNNNNNNSISQQQQTQVSTQQTQQQQNTTNGIGGAT. The Histidine kinase domain maps to 556 to 908; the sequence is NISHELLSPM…TFHFILSIKS (353 aa). A Phosphohistidine; by autocatalysis modification is found at H559. Disordered stretches follow at residues 711–821, 952–971, 1080–1124, 1157–1258, 1277–1301, 1330–1393, and 1419–1520; these read NSKT…KREK, TKKV…TNYG, NGNN…KQHS, PPKS…ILSP, SLTP…INNG, ASSP…NLSS, and SNNL…PPIL. Composition is skewed to acidic residues over residues 725-735 and 758-789; these read SIDGDYDDQDN and ELDE…DDDT. Composition is skewed to low complexity over residues 790 to 807, 961 to 971, and 1080 to 1096; these read SSNT…FHNN, DNGNNDSTNYG, and NGNN…NNNI. The span at 1097 to 1117 shows a compositional bias: polar residues; it reads QTPNGLNNSRGSSLISTPSTK. Composition is skewed to low complexity over residues 1186–1195 and 1202–1258; these read SSPPINSSSS and TNGS…ILSP. Polar residues predominate over residues 1330–1339; it reads ASSPKQSQRG. Low complexity-rich tracts occupy residues 1340–1376, 1425–1475, 1482–1492, and 1506–1520; these read YSPK…QQQQ, NNNN…STPE, SPRSNNNNNCS, and SSTI…PPIL. One can recognise a Response regulatory domain in the interval 1551–1674; that stretch reads KVLVAEDNTM…LLYEVINTQI (124 aa). At D1605 the chain carries 4-aspartylphosphate. The segment covering 1695–1722 has biased composition (low complexity); that stretch reads NNNNNNTNNNNNNNNSSNPVNNNNSNSI. Residues 1695–1736 are disordered; the sequence is NNNNNNTNNNNNNNNSSNPVNNNNSNSIDATQQELNNEKIRI.

Post-translationally, activation probably requires transfer of a phosphate group between a histidine in the kinase core (transmitter) domain and an aspartate of the receiver domain.

The enzyme catalyses ATP + protein L-histidine = ADP + protein N-phospho-L-histidine.. Acts as a receptor histidine kinase for a signal transduction pathway. This protein undergoes an ATP-dependent autophosphorylation at a conserved histidine residue in the kinase core, and a phosphoryl group is then transferred to a conserved aspartate residue in the receiver domain. The polypeptide is Hybrid signal transduction histidine kinase I (dhkI-1) (Dictyostelium discoideum (Social amoeba)).